The sequence spans 299 residues: GTPase Era (299 aa).

An Era-type G domain is found at 5-175; the sequence is RSGFVCLVGR…IDVLAAALPP (171 aa). The G1 stretch occupies residues 13-20; it reads GRPNTGKS. 13-20 provides a ligand contact to GTP; it reads GRPNTGKS. Residues 39-43 are G2; the sequence is QTTRH. Residues 60-63 are G3; it reads DTPG. GTP-binding positions include 60-64 and 124-127; these read DTPGL and TKID. Residues 124-127 are G4; the sequence is TKID. Positions 154–156 are G5; it reads VSA. The KH type-2 domain maps to 206-285; it reads VRDELPHSLA…YLDLRVKVAK (80 aa).

It belongs to the TRAFAC class TrmE-Era-EngA-EngB-Septin-like GTPase superfamily. Era GTPase family. As to quaternary structure, monomer.

The protein resides in the cell envelope. The protein localises to the secreted. Its subcellular location is the cell wall. Its function is as follows. Exhibits GTPase activity. Binds RNA but is probably not involved in ribosome assembly in mycobacteria. In Mycolicibacterium paratuberculosis (strain ATCC BAA-968 / K-10) (Mycobacterium paratuberculosis), this protein is GTPase Era.